The chain runs to 136 residues: Small ribosomal subunit protein eS8 (136 aa).

The segment at 1–23 (MGVYHGNDLKKPTGGKKRPHQKV) is disordered. Over residues 13-23 (TGGKKRPHQKV) the composition is skewed to basic residues.

The protein belongs to the eukaryotic ribosomal protein eS8 family. In terms of assembly, part of the 30S ribosomal subunit.

The polypeptide is Small ribosomal subunit protein eS8 (Hyperthermus butylicus (strain DSM 5456 / JCM 9403 / PLM1-5)).